The following is a 207-amino-acid chain: Ion-translocating oxidoreductase complex subunit G (207 aa).

Residues 11–31 (GILLGFIALLCTIISAGIFFL) traverse the membrane as a helical segment. At Thr175 the chain carries FMN phosphoryl threonine.

This sequence belongs to the RnfG family. As to quaternary structure, the complex is composed of six subunits: RnfA, RnfB, RnfC, RnfD, RnfE and RnfG. Requires FMN as cofactor.

The protein resides in the cell inner membrane. Its function is as follows. Part of a membrane-bound complex that couples electron transfer with translocation of ions across the membrane. This Haemophilus influenzae (strain ATCC 51907 / DSM 11121 / KW20 / Rd) protein is Ion-translocating oxidoreductase complex subunit G.